The following is an 80-amino-acid chain: Large ribosomal subunit protein bL31 (80 aa).

Cys16, Cys18, Cys38, and Cys41 together coordinate Zn(2+).

This sequence belongs to the bacterial ribosomal protein bL31 family. Type A subfamily. In terms of assembly, part of the 50S ribosomal subunit. Zn(2+) serves as cofactor.

Its function is as follows. Binds the 23S rRNA. The polypeptide is Large ribosomal subunit protein bL31 (Rhodococcus jostii (strain RHA1)).